Here is a 141-residue protein sequence, read N- to C-terminus: Molybdopterin synthase catalytic subunit 2 (141 aa).

Substrate-binding positions include 37 to 39 (MIR), 103 to 104 (HR), lysine 119, and 126 to 128 (KHQ).

It belongs to the MoaE family. In terms of assembly, heterotetramer of 2 MoaD subunits and 2 MoaE subunits. Also stable as homodimer. The enzyme changes between these two forms during catalysis.

The catalysed reaction is 2 [molybdopterin-synthase sulfur-carrier protein]-C-terminal-Gly-aminoethanethioate + cyclic pyranopterin phosphate + H2O = molybdopterin + 2 [molybdopterin-synthase sulfur-carrier protein]-C-terminal Gly-Gly + 2 H(+). Its pathway is cofactor biosynthesis; molybdopterin biosynthesis. Converts molybdopterin precursor Z into molybdopterin. This requires the incorporation of two sulfur atoms into precursor Z to generate a dithiolene group. The sulfur is provided by MoaD. The chain is Molybdopterin synthase catalytic subunit 2 (moaE2) from Mycobacterium tuberculosis (strain CDC 1551 / Oshkosh).